A 548-amino-acid chain; its full sequence is Medium/long-chain-fatty-acid--CoA/3-oxocholest-4-en-26-oate--CoA ligase (548 aa).

ATP contacts are provided by residues 174–182 (TGGTTGFPK), Asp-415, Arg-430, and Lys-521. The span at 520–541 (GKPDYRWAKEQTEARPADDVHA) shows a compositional bias: basic and acidic residues. Positions 520–548 (GKPDYRWAKEQTEARPADDVHAGHVTSGG) are disordered.

The protein belongs to the ATP-dependent AMP-binding enzyme family.

It carries out the reaction a medium-chain fatty acid + ATP + CoA = a medium-chain fatty acyl-CoA + AMP + diphosphate. The enzyme catalyses a long-chain fatty acid + ATP + CoA = a long-chain fatty acyl-CoA + AMP + diphosphate. It catalyses the reaction (25S)-3-oxocholest-4-en-26-oate + ATP + CoA = (25S)-3-oxocholest-4-en-26-oyl-CoA + AMP + diphosphate. Its pathway is lipid metabolism; fatty acid biosynthesis. It functions in the pathway steroid metabolism; cholesterol metabolism. Functionally, catalyzes the activation of medium/long-chain fatty acids as acyl-coenzyme A (acyl-CoA), which are then transferred to the multifunctional polyketide synthase (PKS) type III for further chain extension. Also involved in the degradation of cholesterol via the degradation of the side chains of C-24 branched-chain sterols. Catalyzes the ATP-dependent CoA thioesterification of the sterol 3-oxocholest-4-en-26-oate to yield 3-oxocholest-4-en-26-oyl-CoA. This chain is Medium/long-chain-fatty-acid--CoA/3-oxocholest-4-en-26-oate--CoA ligase, found in Mycobacterium bovis (strain ATCC BAA-935 / AF2122/97).